The primary structure comprises 730 residues: 1,4-alpha-glucan branching enzyme GlgB (730 aa).

Residue Asp-405 is the Nucleophile of the active site. Glu-458 (proton donor) is an active-site residue.

It belongs to the glycosyl hydrolase 13 family. GlgB subfamily. In terms of assembly, monomer.

It catalyses the reaction Transfers a segment of a (1-&gt;4)-alpha-D-glucan chain to a primary hydroxy group in a similar glucan chain.. Its pathway is glycan biosynthesis; glycogen biosynthesis. In terms of biological role, catalyzes the formation of the alpha-1,6-glucosidic linkages in glycogen by scission of a 1,4-alpha-linked oligosaccharide from growing alpha-1,4-glucan chains and the subsequent attachment of the oligosaccharide to the alpha-1,6 position. The polypeptide is 1,4-alpha-glucan branching enzyme GlgB (Haemophilus influenzae (strain 86-028NP)).